Reading from the N-terminus, the 209-residue chain is 2-phospho-L-lactate guanylyltransferase (209 aa).

This sequence belongs to the CofC family. Homodimer.

The enzyme catalyses (2S)-2-phospholactate + GTP + H(+) = (2S)-lactyl-2-diphospho-5'-guanosine + diphosphate. It participates in cofactor biosynthesis; coenzyme F420 biosynthesis. Functionally, guanylyltransferase that catalyzes the activation of (2S)-2-phospholactate (2-PL) as (2S)-lactyl-2-diphospho-5'-guanosine, via the condensation of 2-PL with GTP. It is involved in the biosynthesis of coenzyme F420, a hydride carrier cofactor. The protein is 2-phospho-L-lactate guanylyltransferase of Halobacterium salinarum (strain ATCC 29341 / DSM 671 / R1).